The sequence spans 297 residues: MEDYIKIEKIGEGTYGVVYKGRHRVTGQIVAMKKIRLESEEEGVPSTAIREISLLKELRHPNIVSLQDVLMQDSRLYLIFEFLSMDLKKYLDSIPPGQFMDSSLVKSYLHQILQGIVFCHSRRVLHRDLKPQNLLIDDKGTIKLADFGLARAFGIPIRVYTHEVVTLWYRSPEVLLGSARYSTPVDIWSIGTIFAELATKKPLFHGDSEIDQLFRIFRALGTPNNEVWPEVESLQDYKNTFPKWKPGSLASHVKNLDENGLDLLSKMLVYDPAKRISGKMALKHPYFDDLDNQIKKM.

Residue methionine 1 is modified to N-acetylmethionine. Tyrosine 4 carries the phosphotyrosine; by PKR modification. The 284-residue stretch at 4-287 folds into the Protein kinase domain; that stretch reads YIKIEKIGEG…GKMALKHPYF (284 aa). An N6-acetyllysine; alternate mark is found at lysine 6 and lysine 9. Glycyl lysine isopeptide (Lys-Gly) (interchain with G-Cter in SUMO2); alternate cross-links involve residues lysine 6 and lysine 9. Residue 10–18 participates in ATP binding; sequence IGEGTYGVV. Threonine 14 is modified (phosphothreonine). Residue tyrosine 15 is modified to Phosphotyrosine; by PKMYT1, WEE1, WEE2 and PKC/PRKCD. Tyrosine 15 is subject to Phosphotyrosine; by WEE1 and WEE2. Phosphotyrosine is present on tyrosine 19. A Glycyl lysine isopeptide (Lys-Gly) (interchain with G-Cter in SUMO2) cross-link involves residue lysine 20. Lysine 33 serves as a coordination point for ATP. Serine 39 carries the phosphoserine modification. At tyrosine 77 the chain carries Phosphotyrosine. Aspartate 128 serves as the catalytic Proton acceptor. Lysine 139 is covalently cross-linked (Glycyl lysine isopeptide (Lys-Gly) (interchain with G-Cter in SUMO2)). Threonine 141 bears the Phosphothreonine mark. Threonine 161 is modified (phosphothreonine; by CAK). Position 178 is a phosphoserine (serine 178). Threonine 222 is modified (phosphothreonine). Lysine 245 carries the post-translational modification N6-succinyllysine. Residue serine 248 is modified to Phosphoserine.

This sequence belongs to the protein kinase superfamily. CMGC Ser/Thr protein kinase family. CDC2/CDKX subfamily. Forms a stable but non-covalent complex with a regulatory subunit and with a cyclin. Interacts with cyclins-B (CCNB1, CCNB2 and CCNB3) to form a serine/threonine kinase holoenzyme complex also known as maturation promoting factor (MPF). The cyclin subunit imparts substrate specificity to the complex. Can also form CDK1-cylin-D and CDK1-cyclin-E complexes that phosphorylate RB1 in vitro. Binds to RB1 and other transcription factors such as FOXO1 and RUNX2. Promotes G2-M transition when in complex with a cyclin-B. Interacts with DLGAP5. Binds to the CDK inhibitors CDKN1A/p21 and CDKN1B/p27. Isoform 2 is unable to complex with cyclin-B1 and also fails to bind to CDKN1A/p21. Interacts with catalytically active CCNB1 and RALBP1 during mitosis to form an endocytotic complex during interphase. Associates with cyclins-A and B1 during S-phase in regenerating hepatocytes. Interacts with FANCC. Interacts with CEP63; this interaction recruits CDK1 to centrosomes. Interacts with CENPA. Interacts with NR1D1. Interacts with proteasome subunit PSMA8; to participate in meiosis progression during spermatogenesis. Phosphorylation at Thr-161 by CAK/CDK7 activates kinase activity. Phosphorylation at Thr-14 and Tyr-15 by PKMYT1 prevents nuclear translocation. Phosphorylation at Tyr-15 by WEE1 and WEE2 inhibits the protein kinase activity and acts as a negative regulator of entry into mitosis (G2 to M transition). Phosphorylation by PKMYT1 and WEE1 takes place during mitosis to keep CDK1-cyclin-B complexes inactive until the end of G2. By the end of G2, PKMYT1 and WEE1 are inactivated, but CDC25A and CDC25B are activated. Dephosphorylation by active CDC25A and CDC25B at Thr-14 and Tyr-15, leads to CDK1 activation at the G2-M transition. Phosphorylation at Tyr-15 by WEE2 during oogenesis is required to maintain meiotic arrest in oocytes during the germinal vesicle (GV) stage, a long period of quiescence at dictyate prophase I, leading to prevent meiotic reentry. Phosphorylation by WEE2 is also required for metaphase II exit during egg activation to ensure exit from meiosis in oocytes and promote pronuclear formation. Phosphorylated at Tyr-4 by PKR/EIF2AK2 upon genotoxic stress. This phosphorylation triggers CDK1 polyubiquitination and subsequent proteolysis, thus leading to G2 arrest. In response to UV irradiation, phosphorylation at Tyr-15 by PRKCD activates the G2/M DNA damage checkpoint. In terms of processing, polyubiquitinated upon genotoxic stress.

The protein resides in the nucleus. Its subcellular location is the cytoplasm. It is found in the mitochondrion. The protein localises to the cytoskeleton. It localises to the microtubule organizing center. The protein resides in the centrosome. Its subcellular location is the spindle. It catalyses the reaction L-seryl-[protein] + ATP = O-phospho-L-seryl-[protein] + ADP + H(+). It carries out the reaction L-threonyl-[protein] + ATP = O-phospho-L-threonyl-[protein] + ADP + H(+). The enzyme catalyses [DNA-directed RNA polymerase] + ATP = phospho-[DNA-directed RNA polymerase] + ADP + H(+). Phosphorylation at Thr-14 or Tyr-15 inactivates the enzyme, while phosphorylation at Thr-161 activates it. Activated through a multistep process; binding to cyclin-B is required for relocation of cyclin-kinase complexes to the nucleus, activated by CAK/CDK7-mediated phosphorylation on Thr-161, and CDC25-mediated dephosphorylation of inhibitory phosphorylation on Thr-14 and Tyr-15. Activity is restricted during S-phase in an ATR-dependent manner to prevent premature entry into G2. Repressed by the CDK inhibitors CDKN1A/p21 and CDKN1B/p27 during the G1 phase and by CDKN1A/p21 at the G1-S checkpoint upon DNA damage. Transient activation by rapid and transient dephosphorylation at Tyr-15 triggered by TGFB1. Its function is as follows. Plays a key role in the control of the eukaryotic cell cycle by modulating the centrosome cycle as well as mitotic onset; promotes G2-M transition via association with multiple interphase cyclins. Phosphorylates PARVA/actopaxin, APC, AMPH, APC, BARD1, Bcl-xL/BCL2L1, BRCA2, CALD1, CASP8, CDC7, CDC20, CDC25A, CDC25C, CC2D1A, CENPA, CSNK2 proteins/CKII, FZR1/CDH1, CDK7, CEBPB, CHAMP1, DMD/dystrophin, EEF1 proteins/EF-1, EZH2, KIF11/EG5, EGFR, FANCG, FOS, GFAP, GOLGA2/GM130, GRASP1, UBE2A/hHR6A, HIST1H1 proteins/histone H1, HMGA1, HIVEP3/KRC, KAT5, LMNA, LMNB, LBR, MKI67, LATS1, MAP1B, MAP4, MARCKS, MCM2, MCM4, MKLP1, MLST8, MYB, NEFH, NFIC, NPC/nuclear pore complex, PITPNM1/NIR2, NPM1, NCL, NUCKS1, NPM1/numatrin, ORC1, PRKAR2A, EEF1E1/p18, EIF3F/p47, p53/TP53, NONO/p54NRB, PAPOLA, PLEC/plectin, RB1, TPPP, UL40/R2, RAB4A, RAP1GAP, RBBP8/CtIP, RCC1, RPS6KB1/S6K1, KHDRBS1/SAM68, ESPL1, SKI, BIRC5/survivin, STIP1, TEX14, beta-tubulins, MAPT/TAU, NEDD1, VIM/vimentin, TK1, FOXO1, RUNX1/AML1, SAMHD1, SIRT2, CGAS, ZAR1 and RUNX2. CDK1/CDC2-cyclin-B controls pronuclear union in interphase fertilized eggs. Essential for early stages of embryonic development. During G2 and early mitosis, CDC25A/B/C-mediated dephosphorylation activates CDK1/cyclin complexes which phosphorylate several substrates that trigger at least centrosome separation, Golgi dynamics, nuclear envelope breakdown and chromosome condensation. Once chromosomes are condensed and aligned at the metaphase plate, CDK1 activity is switched off by WEE1- and PKMYT1-mediated phosphorylation to allow sister chromatid separation, chromosome decondensation, reformation of the nuclear envelope and cytokinesis. Phosphorylates KRT5 during prometaphase and metaphase. Inactivated by PKR/EIF2AK2- and WEE1-mediated phosphorylation upon DNA damage to stop cell cycle and genome replication at the G2 checkpoint thus facilitating DNA repair. Reactivated after successful DNA repair through WIP1-dependent signaling leading to CDC25A/B/C-mediated dephosphorylation and restoring cell cycle progression. Catalyzes lamin (LMNA, LMNB1 and LMNB2) phosphorylation at the onset of mitosis, promoting nuclear envelope breakdown. In proliferating cells, CDK1-mediated FOXO1 phosphorylation at the G2-M phase represses FOXO1 interaction with 14-3-3 proteins and thereby promotes FOXO1 nuclear accumulation and transcription factor activity, leading to cell death of postmitotic neurons. The phosphorylation of beta-tubulins regulates microtubule dynamics during mitosis. NEDD1 phosphorylation promotes PLK1-mediated NEDD1 phosphorylation and subsequent targeting of the gamma-tubulin ring complex (gTuRC) to the centrosome, an important step for spindle formation. In addition, CC2D1A phosphorylation regulates CC2D1A spindle pole localization and association with SCC1/RAD21 and centriole cohesion during mitosis. The phosphorylation of Bcl-xL/BCL2L1 after prolongated G2 arrest upon DNA damage triggers apoptosis. In contrast, CASP8 phosphorylation during mitosis prevents its activation by proteolysis and subsequent apoptosis. This phosphorylation occurs in cancer cell lines, as well as in primary breast tissues and lymphocytes. EZH2 phosphorylation promotes H3K27me3 maintenance and epigenetic gene silencing. CALD1 phosphorylation promotes Schwann cell migration during peripheral nerve regeneration. CDK1-cyclin-B complex phosphorylates NCKAP5L and mediates its dissociation from centrosomes during mitosis. Regulates the amplitude of the cyclic expression of the core clock gene BMAL1 by phosphorylating its transcriptional repressor NR1D1, and this phosphorylation is necessary for SCF(FBXW7)-mediated ubiquitination and proteasomal degradation of NR1D1. Phosphorylates EML3 at 'Thr-881' which is essential for its interaction with HAUS augmin-like complex and TUBG1. Phosphorylates CGAS during mitosis, leading to its inhibition, thereby preventing CGAS activation by self DNA during mitosis. Phosphorylates SKA3 during mitosis which promotes SKA3 binding to the NDC80 complex and anchoring of the SKA complex to kinetochores, to enable stable attachment of mitotic spindle microtubules to kinetochores. This is Cyclin-dependent kinase 1 (Cdk1) from Mus musculus (Mouse).